A 201-amino-acid polypeptide reads, in one-letter code: MSKVLVLKSSILAGYSQSNQLSDYFVEQWREKHSADEITVRDLAANPIPVLDGELVGALRPSDAPLTTRQQEALALSDELIAELKAHDVIVIAAPMYNFNISTQLKNYFDLVARAGVTFRYTENGPEGLVTGKKAIVITSRGGIHKDGPTDLVTPYLSTFLGFIGITDVKFVFAEGIAYGPEMAAKAQSDAKAAIDSIVAA.

FMN contacts are provided by residues Ser-10, 16-18 (SQS), 96-99 (MYNF), and 140-143 (SRGG).

It belongs to the azoreductase type 1 family. As to quaternary structure, homodimer. Requires FMN as cofactor.

The enzyme catalyses 2 a quinone + NADH + H(+) = 2 a 1,4-benzosemiquinone + NAD(+). It catalyses the reaction N,N-dimethyl-1,4-phenylenediamine + anthranilate + 2 NAD(+) = 2-(4-dimethylaminophenyl)diazenylbenzoate + 2 NADH + 2 H(+). Quinone reductase that provides resistance to thiol-specific stress caused by electrophilic quinones. Functionally, also exhibits azoreductase activity. Catalyzes the reductive cleavage of the azo bond in aromatic azo compounds to the corresponding amines. In Escherichia coli O157:H7, this protein is FMN-dependent NADH:quinone oxidoreductase.